The following is a 406-amino-acid chain: Homocysteine-responsive endoplasmic reticulum-resident ubiquitin-like domain member 2 protein (406 aa).

The region spanning 10-89 (VTLIIKAPNQ…HMVHLVCTSR (80 aa)) is the Ubiquitin-like domain. The segment at 86–154 (CTSRTPPSSP…TLPQAQTDQA (69 aa)) is disordered. 2 stretches are compositionally biased toward low complexity: residues 87–98 (TSRTPPSSPKSS) and 106–126 (ALASSSNSSSDHSGSTTPSSG). Residues 127–154 (QETLSLAVGSSSEGLRQRTLPQAQTDQA) show a composition bias toward polar residues. The chain crosses the membrane as a helical span at residues 302-322 (FIMVMGAMLLVYLHQAGWFPF).

It is found in the membrane. Functionally, could be involved in the unfolded protein response (UPR) pathway. This Homo sapiens (Human) protein is Homocysteine-responsive endoplasmic reticulum-resident ubiquitin-like domain member 2 protein (HERPUD2).